We begin with the raw amino-acid sequence, 366 residues long: Probable neutral protease 2 homolog B (366 aa).

Residues 1-19 (MQVIVALAALSSLAAPALG) form the signal peptide. The propeptide occupies 20 to 189 (FSIPRGVPVS…RGPRSRITKR (170 aa)). Intrachain disulfides connect cysteine 197-cysteine 267, cysteine 274-cysteine 292, and cysteine 306-cysteine 366. Histidine 317 provides a ligand contact to Zn(2+). Residue glutamate 318 is part of the active site. Histidine 321 and aspartate 332 together coordinate Zn(2+).

The protein belongs to the peptidase M35 family. The cofactor is Zn(2+).

The protein resides in the secreted. The catalysed reaction is Preferential cleavage of bonds with hydrophobic residues in P1'. Also 3-Asn-|-Gln-4 and 8-Gly-|-Ser-9 bonds in insulin B chain.. In terms of biological role, probable secreted metalloprotease that shows high activities on basic nuclear substrates such as histone and protamine. May be involved in virulence. This is Probable neutral protease 2 homolog B (NpII-B) from Trichophyton rubrum (Athlete's foot fungus).